The sequence spans 239 residues: MARGCLCCVKYMMFLFNLLFWLSGCGLLGVGIWLSVSQGSFATFSPSFPSLSAANLVITLGSVVMVTGFLGCLGAIKENKCLLLSFFIVLLIILLAELILLILFFVYTEKVSENAKQDLKDGLRLYNTDNNVGLRNAWNIIQAEWQCCGVTGLSDWHEALQEKSVPDRCCQEHYTECGRNTTNVFWSQGCYEKVEEWLNDNKHLLGTIAMCVLVLQLLGMAFSMTLYQQIHRAGKKYDA.

The Cytoplasmic portion of the chain corresponds to 1–13 (MARGCLCCVKYMM). The helical transmembrane segment at 14–34 (FLFNLLFWLSGCGLLGVGIWL) threads the bilayer. The Extracellular segment spans residues 35 to 55 (SVSQGSFATFSPSFPSLSAAN). A helical membrane pass occupies residues 56–76 (LVITLGSVVMVTGFLGCLGAI). The Cytoplasmic portion of the chain corresponds to 77–85 (KENKCLLLS). The helical transmembrane segment at 86 to 106 (FFIVLLIILLAELILLILFFV) threads the bilayer. At 107 to 203 (YTEKVSENAK…VEEWLNDNKH (97 aa)) the chain is on the extracellular side. Asn180 carries N-linked (GlcNAc...) asparagine glycosylation. Residues 204–224 (LLGTIAMCVLVLQLLGMAFSM) traverse the membrane as a helical segment. Residues 225–239 (TLYQQIHRAGKKYDA) are Cytoplasmic-facing.

It belongs to the tetraspanin (TM4SF) family.

The protein resides in the membrane. This chain is Tetraspanin-9 (tspan9), found in Danio rerio (Zebrafish).